Consider the following 60-residue polypeptide: Cecropin-B1 (60 aa).

The signal sequence occupies residues 1 to 24 (MNFSKVFALVLLIGLVLLTGHTEA).

It belongs to the cecropin family.

It localises to the secreted. Its function is as follows. Putative antimicrobial peptide. Partially neutralizes lipopolysaccharides (LPS). Exhibits anti-inflammatory properties: inhibits LPS-induced iNOS/NOS2 transcription, nitric oxide (NO) and pro-inflammatory cytokine production in mouse macrophages and human peripheral blood mononuclear cells (PBMCs); inhibits LPS-induced activation of MAPK and NF-kappa-B signaling pathways in mouse macrophages. This chain is Cecropin-B1, found in Aedes aegypti (Yellowfever mosquito).